The following is a 487-amino-acid chain: Betaine aldehyde dehydrogenase (487 aa).

K(+) contacts are provided by Ile-27 and Asp-93. Residue Gly-149 to Trp-151 coordinates NAD(+). Residue Lys-161 is the Charge relay system of the active site. NAD(+) contacts are provided by residues Lys-175–Glu-178 and Ser-228–Thr-231. Residue Leu-243 participates in K(+) binding. The active-site Proton acceptor is the Glu-249. The NAD(+) site is built by Gly-251, Cys-283, and Glu-384. Cys-283 serves as the catalytic Nucleophile. Position 283 is a cysteine sulfenic acid (-SOH) (Cys-283). Positions 454 and 457 each coordinate K(+). Glu-461 functions as the Charge relay system in the catalytic mechanism.

Belongs to the aldehyde dehydrogenase family. As to quaternary structure, dimer of dimers. The cofactor is K(+).

The enzyme catalyses betaine aldehyde + NAD(+) + H2O = glycine betaine + NADH + 2 H(+). The protein operates within amine and polyamine biosynthesis; betaine biosynthesis via choline pathway; betaine from betaine aldehyde: step 1/1. Functionally, involved in the biosynthesis of the osmoprotectant glycine betaine. Catalyzes the irreversible oxidation of betaine aldehyde to the corresponding acid. This Brucella anthropi (strain ATCC 49188 / DSM 6882 / CCUG 24695 / JCM 21032 / LMG 3331 / NBRC 15819 / NCTC 12168 / Alc 37) (Ochrobactrum anthropi) protein is Betaine aldehyde dehydrogenase.